Here is a 22-residue protein sequence, read N- to C-terminus: Piscidin-3 (22 aa).

Glycine 22 carries the glycine amide modification.

The protein belongs to the pleurocidin family. In terms of tissue distribution, mast cells in gill, skin and gut, and in lining blood vessels in the viscera.

The protein resides in the secreted. It is found in the membrane. Functionally, antimicrobial peptide with broad-spectrum activity against Gram-positive and Gram-negative bacteria. Rapidly inactivates both channel catfish herpesvirus (ED(50)=11 uM) and frog virus 3 (ED(50)=16 uM) over a wide temperature range. Has hemolytic activity. This Morone chrysops x Morone saxatilis (White bass x Striped bass) protein is Piscidin-3.